A 225-amino-acid chain; its full sequence is Histone H1.5 (225 aa).

The segment at 1–23 (MSDVAVAETPAVKTPTKASKATK) is disordered. Ser-2 bears the N-acetylserine mark. Residues 9–19 (TPAVKTPTKAS) show a composition bias toward low complexity. The 77-residue stretch at 37 to 113 (AHPPFINMIT…GANGRFRLAV (77 aa)) folds into the H15 domain. Residues 145–156 (KKTVAKKTGDKV) show a composition bias toward basic and acidic residues. Residues 145 to 225 (KKTVAKKTGD…RKAVGTAPKA (81 aa)) are disordered. The span at 157–175 (KKVKSPKRIAKPAVKKVTK) shows a compositional bias: basic residues. Positions 176-208 (KAAAPTKSAANETAPKKAAATEAAPKKAAVTKA) are enriched in low complexity.

The protein belongs to the histone H1/H5 family.

The protein resides in the nucleus. It localises to the chromosome. In terms of biological role, histones H1 are necessary for the condensation of nucleosome chains into higher-order structures. The sequence is that of Histone H1.5 (hil-5) from Caenorhabditis elegans.